A 219-amino-acid polypeptide reads, in one-letter code: MANVSIRKYKNSDYETVNFLFVEGTKEHLPAACWNTLKKPRFYFIIIVACASIFMCTSSYVLSLTSLVALLAVGWYGLYLEFHGYASRCQREDMLDIENSYMMSDNTCFWVAEIDRKVVGIVGAKPLKEADDELFLLHLSVARDCRQQRIGTKLCQTVIDFARQRGFKAVCLETANIQDAAIKLYEAVGFKKSLVAIPPFLLNQYTSFTVIYYRYDIKS.

2 helical membrane-spanning segments follow: residues 42–62 (FYFI…SYVL) and 64–84 (LTSL…EFHG). Residues 62 to 218 (LSLTSLVALL…TVIYYRYDIK (157 aa)) enclose the N-acetyltransferase domain.

Belongs to the camello family. As to expression, at the beginning of gastrulation, expressed in deep cells of the presumptive mesoderm. At later gastrulation stages, expressed at the interface between already involuted and preinvoluted mesoderm. At late neurula and tailbud stages, expressed in the deep mass of cells lying ventrally and laterally to the closed blastopore.

It localises to the golgi apparatus membrane. Its function is as follows. Plays a role in regulation of gastrulation, possibly by controlled reduction of cell adhesion which is necessary for optimal cell motility. The chain is Probable N-acetyltransferase camello from Xenopus laevis (African clawed frog).